Consider the following 309-residue polypeptide: UDP-N-acetylenolpyruvoylglucosamine reductase (309 aa).

In terms of domain architecture, FAD-binding PCMH-type spans 33-198; the sequence is RVGGPAQVLF…TSARFRGTPA (166 aa). Residue Arg178 is part of the active site. Catalysis depends on Ser227, which acts as the Proton donor. Glu297 is a catalytic residue.

The protein belongs to the MurB family. It depends on FAD as a cofactor.

Its subcellular location is the cytoplasm. The catalysed reaction is UDP-N-acetyl-alpha-D-muramate + NADP(+) = UDP-N-acetyl-3-O-(1-carboxyvinyl)-alpha-D-glucosamine + NADPH + H(+). Its pathway is cell wall biogenesis; peptidoglycan biosynthesis. Functionally, cell wall formation. The chain is UDP-N-acetylenolpyruvoylglucosamine reductase from Rhodopseudomonas palustris (strain HaA2).